The following is a 298-amino-acid chain: Cholesterol 25-hydroxylase (298 aa).

Residue Asn-5 is glycosylated (N-linked (GlcNAc...) asparagine). The next 3 membrane-spanning stretches (helical) occupy residues 38-58 (FFPV…FVVL), 84-104 (LLPC…PVTL), and 124-144 (LLSH…AWHL). In terms of domain architecture, Fatty acid hydroxylase spans 128 to 263 (VLICLLLFDT…FTHWDKMLGT (136 aa)). A Histidine box-1 motif is present at residues 142–146 (WHLLH). Residues 157–161 (HKVHH) carry the Histidine box-2 motif. N-linked (GlcNAc...) asparagine glycosylation is present at Asn-163. 2 helical membrane-spanning segments follow: residues 167 to 187 (FALA…FFDV) and 190 to 210 (VAML…NIWL). A Histidine box-3 motif is present at residues 238–244 (HHDLHHS).

This sequence belongs to the sterol desaturase family. Fe cation serves as cofactor. Post-translationally, N-glycosylated. As to expression, expressed in testicular macrophages at all stages, with the highest level in 10 day old animals.

It localises to the endoplasmic reticulum membrane. It carries out the reaction cholesterol + AH2 + O2 = 25-hydroxycholesterol + A + H2O. The enzyme catalyses cholesterol + NADPH + O2 + H(+) = 25-hydroxycholesterol + NADP(+) + H2O. In terms of biological role, catalyzes the formation of 25-hydroxycholesterol from cholesterol, leading to repress cholesterol biosynthetic enzymes. Plays a key role in cell positioning and movement in lymphoid tissues: 25-hydroxycholesterol is an intermediate in biosynthesis of 7-alpha,25-dihydroxycholesterol (7-alpha,25-OHC), an oxysterol that acts as a ligand for the G protein-coupled receptor GPR183/EBI2, a chemotactic receptor for a number of lymphoid cells. May play an important role in regulating lipid metabolism by synthesizing a corepressor that blocks sterol regulatory element binding protein (SREBP) processing. In testis, production of 25-hydroxycholesterol by macrophages plays a role in Leydig cell differentiation. Required to restrain inflammation in macrophages: production of 25-hydroxycholesterol protects macrophages from cholesterol overload, thereby preventing mitochondrial DNA release and subsequent activation of the AIM2 inflammasome. Interferon-stimulated gene which has broad antiviral activities against a wide range of enveloped viruses. Functionally, catalyzes the formation of 25-hydroxycholesterol from cholesterol, leading to repress cholesterol biosynthetic enzymes. Plays a key role in cell positioning and movement in lymphoid tissues: 25-hydroxycholesterol is an intermediate in biosynthesis of 7-alpha,25-dihydroxycholesterol (7-alpha,25-OHC), an oxysterol that acts as a ligand for the G protein-coupled receptor GPR183/EBI2, a chemotactic receptor for a number of lymphoid cells. May play an important role in regulating lipid metabolism by synthesizing a corepressor that blocks sterol regulatory element binding protein (SREBP) processing. As an interferon-stimulated gene, has broad antiviral activities against a wide range of enveloped viruses. Its product, 25-hydroxycholesterol, activates the ER-localized enzyme ACAT to induce internalization of accessible cholesterol on the plasma membrane and restricts virus-host membranes fusion which inhibits virus replication. In testis, production of 25-hydroxycholesterol by macrophages plays a role in Leydig cell differentiation. This Rattus norvegicus (Rat) protein is Cholesterol 25-hydroxylase.